A 483-amino-acid chain; its full sequence is MFS-type transporter ppzB (483 aa).

A run of 5 helical transmembrane segments spans residues 18–38, 62–82, 96–116, 149–169, and 178–198; these read FILT…GILL, AFLA…GWAA, MFLV…LLVV, IGTI…LGGV, and AVFA…ALVI. The N-linked (GlcNAc...) asparagine glycan is linked to N219. The next 6 helical transmembrane spans lie at 281 to 301, 310 to 330, 344 to 364, 374 to 394, 424 to 444, and 453 to 473; these read LAML…ATVP, FSSL…FALG, AAAT…GLPE, VALF…VTSP, FGFS…LGGF, and VMGA…FLFV.

It belongs to the major facilitator superfamily. TCR/Tet family.

Its subcellular location is the membrane. In terms of biological role, MFS-type transporter; part of the gene cluster that mediates the biosynthesis of pyrrolopyrazines, secondary metabolites showing insecticidal activity. Probably involved in the secretion of peramine and other pyrrolopyrazines. The protein is MFS-type transporter ppzB of Metarhizium rileyi (strain RCEF 4871) (Nomuraea rileyi).